The primary structure comprises 288 residues: Cell division protein ZipA (288 aa).

Position 1 (Met-1) is a topological domain, periplasmic. A helical membrane pass occupies residues 2 to 22; the sequence is EIGLREWLIVIGIIVIAGILF. The Cytoplasmic segment spans residues 23 to 288; sequence DGWRRMRGGK…ERRALTQRRG (266 aa). Residues 48-138 are disordered; it reads DEEETTSAEV…DDKPAQRITE (91 aa). 3 stretches are compositionally biased toward basic and acidic residues: residues 64-77, 85-105, and 122-138; these read LDTH…EHDL, RDNK…KDEP, and ARDD…RITE.

This sequence belongs to the ZipA family. As to quaternary structure, interacts with FtsZ via their C-terminal domains.

The protein localises to the cell inner membrane. Functionally, essential cell division protein that stabilizes the FtsZ protofilaments by cross-linking them and that serves as a cytoplasmic membrane anchor for the Z ring. Also required for the recruitment to the septal ring of downstream cell division proteins. This Pseudomonas syringae pv. tomato (strain ATCC BAA-871 / DC3000) protein is Cell division protein ZipA.